The chain runs to 1400 residues: DNA-directed RNA polymerase subunit beta' (1400 aa).

Positions 71, 73, 86, and 89 each coordinate Zn(2+). 3 residues coordinate Mg(2+): Asp-462, Asp-464, and Asp-466. Positions 810, 884, 891, and 894 each coordinate Zn(2+). The tract at residues 1378–1400 is disordered; that stretch reads EKQATIVPPAAPEAEPLALPPAE.

It belongs to the RNA polymerase beta' chain family. As to quaternary structure, the RNAP catalytic core consists of 2 alpha, 1 beta, 1 beta' and 1 omega subunit. When a sigma factor is associated with the core the holoenzyme is formed, which can initiate transcription. The cofactor is Mg(2+). It depends on Zn(2+) as a cofactor.

It carries out the reaction RNA(n) + a ribonucleoside 5'-triphosphate = RNA(n+1) + diphosphate. Functionally, DNA-dependent RNA polymerase catalyzes the transcription of DNA into RNA using the four ribonucleoside triphosphates as substrates. The polypeptide is DNA-directed RNA polymerase subunit beta' (Rhodopseudomonas palustris (strain BisB5)).